The chain runs to 142 residues: Maximins y/Hw (142 aa).

The N-terminal stretch at 1–18 (MIFKYIVAVSFLIASGYA) is a signal peptide. A propeptide spanning residues 19–43 (RSVKNDEQSLSQREVLEEESLREIR) is cleaved from the precursor. Phe-68 is subject to Phenylalanine amide. A propeptide spanning residues 72-121 (TAEDHEVMKRLEAVIRDLDSLDHSEEASERETRGFNQEEIANLFTKKEKR) is cleaved from the precursor. Ile-141 is subject to Isoleucine amide.

This sequence belongs to the bombinin family. Expressed by the skin glands.

Its subcellular location is the secreted. Maximin-y shows antimicrobial activity against bacteria and against the fungus C.albicans. It has little hemolytic activity. Its function is as follows. Maximin-Hw shows antimicrobial activity against bacteria and against the fungus C.albicans. Shows strong hemolytic activity. The sequence is that of Maximins y/Hw from Bombina maxima (Giant fire-bellied toad).